A 351-amino-acid polypeptide reads, in one-letter code: Heme A synthase (351 aa).

Transmembrane regions (helical) follow at residues 17–37, 103–123, 129–149, 164–184, 201–221, 261–281, 289–309, and 316–336; these read WLIL…ATRL, LIGL…WLGQ, LVGL…MVSS, LMTH…LWLD, AMAL…VAGL, FNHR…AWAF, EFAF…LTLV, and LALV…YTVW. Histidine 263 contributes to the heme binding site. A heme-binding site is contributed by histidine 320.

This sequence belongs to the COX15/CtaA family. Type 2 subfamily. In terms of assembly, interacts with CtaB. The cofactor is heme b.

It is found in the cell membrane. It catalyses the reaction Fe(II)-heme o + 2 A + H2O = Fe(II)-heme a + 2 AH2. It participates in porphyrin-containing compound metabolism; heme A biosynthesis; heme A from heme O: step 1/1. Catalyzes the conversion of heme O to heme A by two successive hydroxylations of the methyl group at C8. The first hydroxylation forms heme I, the second hydroxylation results in an unstable dihydroxymethyl group, which spontaneously dehydrates, resulting in the formyl group of heme A. This is Heme A synthase from Hyphomonas neptunium (strain ATCC 15444).